Reading from the N-terminus, the 272-residue chain is Large ribosomal subunit protein uL29m (272 aa).

Disordered stretches follow at residues Met-1–Gln-29, Lys-56–Lys-87, and Ala-227–Leu-272. The segment covering Ser-17–Gln-29 has biased composition (low complexity). Composition is skewed to low complexity over residues Ala-227 to Glu-238 and Pro-249 to Thr-259. The segment covering Ile-260–Leu-272 has biased composition (polar residues).

The protein belongs to the universal ribosomal protein uL29 family. Component of the mitochondrial large ribosomal subunit. Mature mitochondrial ribosomes consist of a small (37S) and a large (54S) subunit. The 37S subunit contains at least 33 different proteins and 1 molecule of RNA (15S). The 54S subunit contains at least 45 different proteins and 1 molecule of RNA (21S).

It localises to the mitochondrion. The protein is Large ribosomal subunit protein uL29m (MRPL4) of Chaetomium globosum (strain ATCC 6205 / CBS 148.51 / DSM 1962 / NBRC 6347 / NRRL 1970) (Soil fungus).